The following is a 290-amino-acid chain: Glyceraldehyde-3-phosphate dehydrogenase (290 aa).

Positions 13 and 58 each coordinate NAD(+). Residues Ser-129 to Thr-131, Thr-160, Thr-189 to Gly-190, and Arg-212 contribute to the D-glyceraldehyde 3-phosphate site. The active-site Nucleophile is Cys-130.

The protein belongs to the glyceraldehyde-3-phosphate dehydrogenase family. Homotetramer.

Its subcellular location is the cytoplasm. It carries out the reaction D-glyceraldehyde 3-phosphate + phosphate + NAD(+) = (2R)-3-phospho-glyceroyl phosphate + NADH + H(+). It participates in carbohydrate degradation; glycolysis; pyruvate from D-glyceraldehyde 3-phosphate: step 1/5. This is Glyceraldehyde-3-phosphate dehydrogenase (GPD) from Lactarius deterrimus (False saffron milkcap).